A 443-amino-acid chain; its full sequence is MEEDSQEDSNLPPKVWHSEMTVSVTGKPPSTVEEDGLPKETDVETIPEILETREPLSLPDVLRISAVLEDTTDQLSILNYIMPIQYEGRQSVCVKSREMNLEGKNLDKLPVASTVTKTPSPLITKERPSLPEIRQGGQFAVEFCKTQDLLFKKPARQTIMTTETLKKIQIDRQFFSDVIADTIEELQDSGTYNSLLQALSKERENKMHFYDVIAREEKGRKQIISLQKQLINVKKEWQFEVQSQNEYIANLKDQLQEMKAKSNLENRYMKTNTELQIAQTQRKCNRTEEVLLEEIEKLRMKTEEEARIHMDIEMFLRKQQQKLEERLEFWMEKYDKDTEMKQNELNALKATKASDLAHLQDLAKTIRECEQVIIEDRIEKEKSKNKIEQDLLELKSVIKLQAWWRGTMIRREIGGFKMPKDKVDSKDSKGKGKGKDKRRGKKK.

Disordered regions lie at residues 1–40 (MEED…LPKE) and 415–443 (GFKM…GKKK). The IQ domain maps to 393–422 (ELKSVIKLQAWWRGTMIRREIGGFKMPKDK). The segment covering 415–430 (GFKMPKDKVDSKDSKG) has biased composition (basic and acidic residues). Over residues 431-443 (KGKGKDKRRGKKK) the composition is skewed to basic residues.

The protein belongs to the DRC9 family. Component of the nexin-dynein regulatory complex (N-DRC). Interacts (via IQ domain) with CALM when calcium levels are low. Does not interact with CALM in the presence of Ca(2+). Interacts with the HSP70 proteins HSPA1L and HSPA8. May form a complex with CAMK4 and HSP70.

It is found in the cytoplasm. The protein localises to the cell projection. Its subcellular location is the cilium. The protein resides in the flagellum. It localises to the cytoskeleton. It is found in the flagellum axoneme. In terms of biological role, component of the nexin-dynein regulatory complex (N-DRC), a key regulator of ciliary/flagellar motility which maintains the alignment and integrity of the distal axoneme and regulates microtubule sliding in motile axonemes. Binds calmodulin when cellular Ca(2+) levels are low and thereby contributes to the regulation of calcium and calmodulin-dependent protein kinase IV (CAMK4) activity; contributes to the regulation of CAMK4 signaling cascades. Required for normal axoneme assembly in sperm flagella, normal sperm tail formation and for male fertility. The polypeptide is Dynein regulatory complex protein 9 (IQCG) (Macaca fascicularis (Crab-eating macaque)).